A 165-amino-acid polypeptide reads, in one-letter code: 3-isopropylmalate dehydratase small subunit (165 aa).

This sequence belongs to the LeuD family. LeuD type 2 subfamily. In terms of assembly, heterodimer of LeuC and LeuD.

The enzyme catalyses (2R,3S)-3-isopropylmalate = (2S)-2-isopropylmalate. Its pathway is amino-acid biosynthesis; L-leucine biosynthesis; L-leucine from 3-methyl-2-oxobutanoate: step 2/4. Functionally, catalyzes the isomerization between 2-isopropylmalate and 3-isopropylmalate, via the formation of 2-isopropylmaleate. This Saccharolobus islandicus (strain Y.G.57.14 / Yellowstone #1) (Sulfolobus islandicus) protein is 3-isopropylmalate dehydratase small subunit.